We begin with the raw amino-acid sequence, 507 residues long: Transcription factor SOX-9 (507 aa).

2 disordered regions span residues 1 to 67 (MNLL…SEED) and 160 to 250 (RLRV…AGKV). Residues 30 to 41 (SAGSPCPSGSGS) show a composition bias toward low complexity. Residues 42–52 (DTENTRPQENT) are compositionally biased toward polar residues. Composition is skewed to basic and acidic residues over residues 56-67 (GEPDLKKESEED) and 160-174 (RLRV…DYKY). A dimerization (DIM) region spans residues 63–103 (ESEEDKFPVCIREAVSQVLKGYDWTLVPMPVRVNGSSKNKP). The segment at 63-103 (ESEEDKFPVCIREAVSQVLKGYDWTLVPMPVRVNGSSKNKP) is PQA. Ser64 is subject to Phosphoserine. Positions 105-173 (VKRPMNAFMV…QHKKDHPDYK (69 aa)) form a DNA-binding region, HMG box. A Phosphoserine modification is found at Ser211. The tract at residues 224–307 (PGEHSGQSQG…LPPNGHPGVP (84 aa)) is transactivation domain (TAM). 2 short sequence motifs (9aaTAD) span residues 275-284 (IGELSSDVIS) and 290-298 (DVNEFDQYL). A disordered region spans residues 335-429 (WMSKQQAPPP…PFNLPHYNPS (95 aa)). Pro residues predominate over residues 341 to 369 (APPPPPQQPPQAPQAPQAPPQQQAPPQPQ). Polar residues predominate over residues 378–420 (HTLTTLSSEPGQSQRTHIKTEQLSPSHYSEQQQHSPQQISYSP). The tract at residues 392–507 (RTHIKTEQLS…QPVYTQLTRP (116 aa)) is transactivation domain (TAC). Residue Lys396 forms a Glycyl lysine isopeptide (Lys-Gly) (interchain with G-Cter in ubiquitin) linkage. Positions 458–466 (SGLYSTFTY) match the 9aaTAD 3 motif. The tract at residues 477-507 (PIADTSGVPSIPQTHSPQHWEQPVYTQLTRP) is disordered. The span at 483 to 507 (GVPSIPQTHSPQHWEQPVYTQLTRP) shows a compositional bias: polar residues.

In terms of assembly, homodimer; homodimerization is required for activity. Interacts (via C-terminus) with ZNF219; forming a complex that binds to the COL2A1 promoter and activates COL2A1 expression. Interacts with DDRGK1. Interacts with EP300/p300. Interacts with beta-catenin (CTNNB1); inhibiting CTNNB1 activity by competing with the binding sites of TCF/LEF within CTNNB1. In terms of processing, acetylated; acetylation impairs nuclear localization and ability to transactivate expression of target genes. Deacetylated by SIRT1. Phosphorylation at Ser-64 and Ser-211 by PKA increases transcriptional activity and may help delay chondrocyte maturation downstream of PTHLH/PTHrP signaling. Phosphorylation at either Ser-64 or Ser-211 is required for sumoylation, but phosphorylation is not dependent on sumoylation. Phosphorylated on tyrosine residues; tyrosine dephosphorylation by PTPN11/SHP2 blocks SOX9 phosphorylation by PKA and subsequent SUMOylation. Post-translationally, sumoylated; phosphorylation at either Ser-64 or Ser-211 is required for sumoylation. Sumoylation is induced by BMP signaling pathway. In terms of processing, ubiquitinated; ubiquitination leads to proteasomal degradation and is negatively regulated by DDRGK1.

It is found in the nucleus. Its function is as follows. Transcription factor that plays a key role in chondrocytes differentiation and skeletal development. Specifically binds the 5'-ACAAAG-3' DNA motif present in enhancers and super-enhancers and promotes expression of genes important for chondrogenesis, including cartilage matrix protein-coding genes COL2A1, COL4A2, COL9A1, COL11A2 and ACAN, SOX5 and SOX6. Also binds to some promoter regions. Plays a central role in successive steps of chondrocyte differentiation. Absolutely required for precartilaginous condensation, the first step in chondrogenesis during which skeletal progenitors differentiate into prechondrocytes. Together with SOX5 and SOX6, required for overt chondrogenesis when condensed prechondrocytes differentiate into early stage chondrocytes, the second step in chondrogenesis. Later, required to direct hypertrophic maturation and block osteoblast differentiation of growth plate chondrocytes: maintains chondrocyte columnar proliferation, delays prehypertrophy and then prevents osteoblastic differentiation of chondrocytes by lowering beta-catenin (CTNNB1) signaling and RUNX2 expression. Also required for chondrocyte hypertrophy, both indirectly, by keeping the lineage fate of chondrocytes, and directly, by remaining present in upper hypertrophic cells and transactivating COL10A1 along with MEF2C. Low lipid levels are the main nutritional determinant for chondrogenic commitment of skeletal progenitor cells: when lipids levels are low, FOXO (FOXO1 and FOXO3) transcription factors promote expression of SOX9, which induces chondrogenic commitment and suppresses fatty acid oxidation. Mechanistically, helps, but is not required, to remove epigenetic signatures of transcriptional repression and deposit active promoter and enhancer marks at chondrocyte-specific genes. Acts in cooperation with the Hedgehog pathway-dependent GLI (GLI1 and GLI3) transcription factors. In addition to cartilage development, also acts as a regulator of proliferation and differentiation in epithelial stem/progenitor cells: involved in the lung epithelium during branching morphogenesis, by balancing proliferation and differentiation and regulating the extracellular matrix. Controls epithelial branching during kidney development. This chain is Transcription factor SOX-9, found in Rattus norvegicus (Rat).